The chain runs to 371 residues: tRNA-specific 2-thiouridylase MnmA (371 aa).

ATP contacts are provided by residues 7-14 (AMSGGVDS) and Leu33. The Nucleophile role is filled by Cys101. Cys101 and Cys213 are disulfide-bonded. An ATP-binding site is contributed by Gly125. Positions 163 to 165 (KDQ) are interaction with tRNA. Cys213 functions as the Cysteine persulfide intermediate in the catalytic mechanism.

The protein belongs to the MnmA/TRMU family.

Its subcellular location is the cytoplasm. It catalyses the reaction S-sulfanyl-L-cysteinyl-[protein] + uridine(34) in tRNA + AH2 + ATP = 2-thiouridine(34) in tRNA + L-cysteinyl-[protein] + A + AMP + diphosphate + H(+). Catalyzes the 2-thiolation of uridine at the wobble position (U34) of tRNA, leading to the formation of s(2)U34. This is tRNA-specific 2-thiouridylase MnmA from Roseiflexus castenholzii (strain DSM 13941 / HLO8).